A 262-amino-acid polypeptide reads, in one-letter code: Indole-3-glycerol phosphate synthase (262 aa).

It belongs to the TrpC family.

It catalyses the reaction 1-(2-carboxyphenylamino)-1-deoxy-D-ribulose 5-phosphate + H(+) = (1S,2R)-1-C-(indol-3-yl)glycerol 3-phosphate + CO2 + H2O. It functions in the pathway amino-acid biosynthesis; L-tryptophan biosynthesis; L-tryptophan from chorismate: step 4/5. The sequence is that of Indole-3-glycerol phosphate synthase from Staphylococcus epidermidis (strain ATCC 35984 / DSM 28319 / BCRC 17069 / CCUG 31568 / BM 3577 / RP62A).